We begin with the raw amino-acid sequence, 536 residues long: Membrane protein insertase YidC (536 aa).

The next 4 helical transmembrane spans lie at Leu5 to Thr25, Gly353 to Leu373, Val418 to Tyr438, and Met495 to Ile515.

This sequence belongs to the OXA1/ALB3/YidC family. Type 1 subfamily. Interacts with the Sec translocase complex via SecD. Specifically interacts with transmembrane segments of nascent integral membrane proteins during membrane integration.

Its subcellular location is the cell inner membrane. Its function is as follows. Required for the insertion and/or proper folding and/or complex formation of integral membrane proteins into the membrane. Involved in integration of membrane proteins that insert both dependently and independently of the Sec translocase complex, as well as at least some lipoproteins. Aids folding of multispanning membrane proteins. In Geobacter sp. (strain M21), this protein is Membrane protein insertase YidC.